Here is a 138-residue protein sequence, read N- to C-terminus: Probable lactoylglutathione lyase (138 aa).

Positions 5–129 (RILHTMLRVG…DGYMIELIQN (125 aa)) constitute a VOC domain. H8 contacts Ni(2+). R12 provides a ligand contact to substrate. A Ni(2+)-binding site is contributed by E59. Substrate contacts are provided by N63 and H77. Ni(2+)-binding residues include H77 and E125. Residue E125 is the Proton donor/acceptor of the active site.

It belongs to the glyoxalase I family. Ni(2+) serves as cofactor.

The enzyme catalyses (R)-S-lactoylglutathione = methylglyoxal + glutathione. Its pathway is secondary metabolite metabolism; methylglyoxal degradation; (R)-lactate from methylglyoxal: step 1/2. In terms of biological role, catalyzes the conversion of hemimercaptal, formed from methylglyoxal and glutathione, to S-lactoylglutathione. The sequence is that of Probable lactoylglutathione lyase (gloA) from Vibrio parahaemolyticus serotype O3:K6 (strain RIMD 2210633).